The primary structure comprises 424 residues: Caspase-2 (424 aa).

The propeptide occupies 1–140; that stretch reads MLGACGMQRY…IVEHSLDSGD (140 aa). One can recognise a CARD domain in the interval 7-96; it reads MQRYHQEALK…QHLAEMILKT (90 aa). Active-site residues include histidine 248 and cysteine 291. Positions 296 to 310 are enriched in basic and acidic residues; sequence TDRGVDQRDGKERSD. Residues 296–325 are disordered; it reads TDRGVDQRDGKERSDSPGCEESDANKEENL.

The protein belongs to the peptidase C14A family. Heterotetramer that consists of two anti-parallel arranged heterodimers, each one formed by a p18 subunit and a p12 subunit.

It carries out the reaction Strict requirement for an Asp residue at P1, with 316-Asp being essential for proteolytic activity and has a preferred cleavage sequence of Val-Asp-Val-Ala-Asp-|-.. Involved in the activation cascade of caspases responsible for apoptosis execution. Might function by either activating some proteins required for cell death or inactivating proteins necessary for cell survival. The chain is Caspase-2 (CASP2) from Gallus gallus (Chicken).